The sequence spans 426 residues: MADKEVYDDAVEERVINEEYKIWKKNTPFLYDLVMTHALEWPSLTVQWLPDVNRPEGKDYVVHRLVLGTHTSDEQNHLVIASAQIPNDDAQFDASHYDSEKGAEFGGFGSVSGKIEIEIKINHEGEVNRARYMPQNPCIIATKTPTSDVLAFDYTKHPSKPDPSGDCSPDLRLRGHQKEGYGLSWNPNLSGNLLSASDDHTICLWDISGAPKEGKIVDAKTIFTGHTAVVEDVSWHLLHESLFGSVADDQKLMIWDTRSNNTSKPSHSVDAHTAEVNCLSFNPYSEFILATGSADKTVALWDLRNLKLKLHSFESHKDEIFQVQWSPHNETILASSGTDRRLNVWDLSKIGEEQSAEDAEDGPPELLFIHGGHTAKISDFSWNPNEPWVICSVSEDNIMQVWQMAENIYNDEEPDTPASELEGQAS.

7 WD repeats span residues 47–123, 129–174, 182–218, 229–270, 276–313, 319–370, and 377–404; these read QWLP…KINH, RARY…LRLR, GLSW…KIVD, VVED…HSVD, VNCL…LHSF, EIFQ…LFIH, and ISDF…VWQM.

It belongs to the WD repeat RBAP46/RBAP48/MSI1 family. In terms of assembly, binds directly to helix 1 of the histone fold of histone H4, a region that is not accessible when H4 is in chromatin.

It localises to the nucleus. Core histone-binding subunit that may target chromatin remodeling factors, histone acetyltransferases and histone deacetylases to their histone substrates in a manner that is regulated by nucleosomal DNA. Component of several complexes which regulate chromatin metabolism. The sequence is that of Histone-binding protein RBBP7 (rbbp7) from Danio rerio (Zebrafish).